We begin with the raw amino-acid sequence, 628 residues long: Biosynthetic arginine decarboxylase (628 aa).

At lysine 101 the chain carries N6-(pyridoxal phosphate)lysine. 281–291 (VDVGGGLGVDY) provides a ligand contact to substrate.

This sequence belongs to the Orn/Lys/Arg decarboxylase class-II family. SpeA subfamily. The cofactor is Mg(2+). Pyridoxal 5'-phosphate serves as cofactor.

It catalyses the reaction L-arginine + H(+) = agmatine + CO2. Its pathway is amine and polyamine biosynthesis; agmatine biosynthesis; agmatine from L-arginine: step 1/1. Functionally, catalyzes the biosynthesis of agmatine from arginine. This is Biosynthetic arginine decarboxylase from Alkalilimnicola ehrlichii (strain ATCC BAA-1101 / DSM 17681 / MLHE-1).